The chain runs to 432 residues: Bifunctional IPC transferase and DIPP synthase (432 aa).

The interval 3–225 is mobA-like NTP transferase; sequence PERAVILAAG…RARRMLVRTA (223 aa). CTP is bound by residues 9–11, Lys-22, and Glu-113; that span reads LAA. Glu-113 provides a ligand contact to Mg(2+). A CDP-alcohol phosphatidyltransferases region spans residues 226–426; that stretch reads VKGTGDGFVS…LTLYFVVKKV (201 aa). The next 3 membrane-spanning stretches (helical) occupy residues 264–284, 337–356, and 385–405; these read FLLG…AGIL, IWYF…SYST, and VFLT…ALFL.

This sequence in the N-terminal section; belongs to the MobA family. In the C-terminal section; belongs to the CDP-alcohol phosphatidyltransferase class-I family. Mg(2+) serves as cofactor.

Its subcellular location is the membrane. It carries out the reaction 1D-myo-inositol 3-phosphate + CTP + H(+) = CDP-1L-myo-inositol + diphosphate. The catalysed reaction is CDP-1L-myo-inositol + 1D-myo-inositol 3-phosphate = bis(1L-myo-inositol) 3,1'-phosphate 1-phosphate + CMP + H(+). In terms of biological role, involved in biosynthesis of di-myo-inositol phosphate (DIP), a widespread organic solute in microorganisms adapted to hot environments. Catalyzes the condensation of CTP and L-myo-inositol-1-phosphate into CDP-L-myo-inositol, as well as the biosynthesis of di-myo-inositol-1,3'-phosphate-1'-phosphate (DIPP) from CDP-L-myo-inositol and L-myo-inositol-1-phosphate. This chain is Bifunctional IPC transferase and DIPP synthase, found in Thermococcus kodakarensis (strain ATCC BAA-918 / JCM 12380 / KOD1) (Pyrococcus kodakaraensis (strain KOD1)).